Consider the following 229-residue polypeptide: Urease accessory protein UreF (229 aa).

Belongs to the UreF family. UreD, UreF and UreG form a complex that acts as a GTP-hydrolysis-dependent molecular chaperone, activating the urease apoprotein by helping to assemble the nickel containing metallocenter of UreC. The UreE protein probably delivers the nickel.

The protein resides in the cytoplasm. In terms of biological role, required for maturation of urease via the functional incorporation of the urease nickel metallocenter. This is Urease accessory protein UreF from Staphylococcus aureus (strain USA300).